The primary structure comprises 375 residues: Queuine tRNA-ribosyltransferase (375 aa).

The active-site Proton acceptor is Asp89. Substrate contacts are provided by residues 89–93 (DSGGF), Asp143, Gln187, and Gly214. Positions 245–251 (GVGKPED) are RNA binding. Asp264 functions as the Nucleophile in the catalytic mechanism. Positions 269–273 (TRNAR) are RNA binding; important for wobble base 34 recognition. Residues Cys302, Cys304, Cys307, and His333 each coordinate Zn(2+).

This sequence belongs to the queuine tRNA-ribosyltransferase family. As to quaternary structure, homodimer. Within each dimer, one monomer is responsible for RNA recognition and catalysis, while the other monomer binds to the replacement base PreQ1. The cofactor is Zn(2+).

The enzyme catalyses 7-aminomethyl-7-carbaguanine + guanosine(34) in tRNA = 7-aminomethyl-7-carbaguanosine(34) in tRNA + guanine. It participates in tRNA modification; tRNA-queuosine biosynthesis. Its function is as follows. Catalyzes the base-exchange of a guanine (G) residue with the queuine precursor 7-aminomethyl-7-deazaguanine (PreQ1) at position 34 (anticodon wobble position) in tRNAs with GU(N) anticodons (tRNA-Asp, -Asn, -His and -Tyr). Catalysis occurs through a double-displacement mechanism. The nucleophile active site attacks the C1' of nucleotide 34 to detach the guanine base from the RNA, forming a covalent enzyme-RNA intermediate. The proton acceptor active site deprotonates the incoming PreQ1, allowing a nucleophilic attack on the C1' of the ribose to form the product. After dissociation, two additional enzymatic reactions on the tRNA convert PreQ1 to queuine (Q), resulting in the hypermodified nucleoside queuosine (7-(((4,5-cis-dihydroxy-2-cyclopenten-1-yl)amino)methyl)-7-deazaguanosine). This Salmonella arizonae (strain ATCC BAA-731 / CDC346-86 / RSK2980) protein is Queuine tRNA-ribosyltransferase.